We begin with the raw amino-acid sequence, 155 residues long: 2-C-methyl-D-erythritol 2,4-cyclodiphosphate synthase (155 aa).

Positions 8 and 10 each coordinate a divalent metal cation. Residues 8–10 (DVH) and 34–35 (HS) each bind 4-CDP-2-C-methyl-D-erythritol 2-phosphate. H42 provides a ligand contact to a divalent metal cation. Residues 56–58 (DIG), 61–65 (FPDSD), 100–106 (AQKPKML), 132–135 (TTEE), F139, and K142 each bind 4-CDP-2-C-methyl-D-erythritol 2-phosphate.

The protein belongs to the IspF family. As to quaternary structure, homotrimer. A divalent metal cation is required as a cofactor.

It catalyses the reaction 4-CDP-2-C-methyl-D-erythritol 2-phosphate = 2-C-methyl-D-erythritol 2,4-cyclic diphosphate + CMP. The protein operates within isoprenoid biosynthesis; isopentenyl diphosphate biosynthesis via DXP pathway; isopentenyl diphosphate from 1-deoxy-D-xylulose 5-phosphate: step 4/6. In terms of biological role, involved in the biosynthesis of isopentenyl diphosphate (IPP) and dimethylallyl diphosphate (DMAPP), two major building blocks of isoprenoid compounds. Catalyzes the conversion of 4-diphosphocytidyl-2-C-methyl-D-erythritol 2-phosphate (CDP-ME2P) to 2-C-methyl-D-erythritol 2,4-cyclodiphosphate (ME-CPP) with a corresponding release of cytidine 5-monophosphate (CMP). The polypeptide is 2-C-methyl-D-erythritol 2,4-cyclodiphosphate synthase (Clostridium botulinum (strain 657 / Type Ba4)).